A 273-amino-acid chain; its full sequence is Ribosomal RNA small subunit methyltransferase A (273 aa).

Residues Asn-18, Leu-20, Gly-45, Glu-66, Asp-91, and Asn-113 each contribute to the S-adenosyl-L-methionine site.

It belongs to the class I-like SAM-binding methyltransferase superfamily. rRNA adenine N(6)-methyltransferase family. RsmA subfamily.

Its subcellular location is the cytoplasm. The catalysed reaction is adenosine(1518)/adenosine(1519) in 16S rRNA + 4 S-adenosyl-L-methionine = N(6)-dimethyladenosine(1518)/N(6)-dimethyladenosine(1519) in 16S rRNA + 4 S-adenosyl-L-homocysteine + 4 H(+). Specifically dimethylates two adjacent adenosines (A1518 and A1519) in the loop of a conserved hairpin near the 3'-end of 16S rRNA in the 30S particle. May play a critical role in biogenesis of 30S subunits. The polypeptide is Ribosomal RNA small subunit methyltransferase A (Shigella boydii serotype 4 (strain Sb227)).